We begin with the raw amino-acid sequence, 145 residues long: Putative esterase PA1618 (145 aa).

Belongs to the thioesterase PaaI family.

The sequence is that of Putative esterase PA1618 from Pseudomonas aeruginosa (strain ATCC 15692 / DSM 22644 / CIP 104116 / JCM 14847 / LMG 12228 / 1C / PRS 101 / PAO1).